We begin with the raw amino-acid sequence, 126 residues long: Holo-[acyl-carrier-protein] synthase (126 aa).

Mg(2+) contacts are provided by aspartate 9 and glutamate 58.

This sequence belongs to the P-Pant transferase superfamily. AcpS family. It depends on Mg(2+) as a cofactor.

The protein resides in the cytoplasm. It carries out the reaction apo-[ACP] + CoA = holo-[ACP] + adenosine 3',5'-bisphosphate + H(+). Its function is as follows. Transfers the 4'-phosphopantetheine moiety from coenzyme A to a Ser of acyl-carrier-protein. This Sodalis glossinidius (strain morsitans) protein is Holo-[acyl-carrier-protein] synthase.